The following is a 563-amino-acid chain: Phosphomethylpyrimidine synthase (563 aa).

The segment at 95–115 (PGKNPSPMNNRTPVRAKQGKS) is disordered. Substrate-binding positions include N200, M229, Y258, H294, 314–316 (SRG), 355–358 (DALR), and E394. H398 serves as a coordination point for Zn(2+). Residue Y421 participates in substrate binding. Zn(2+) is bound at residue H462. Residues C544, C547, and C552 each coordinate [4Fe-4S] cluster.

It belongs to the ThiC family. [4Fe-4S] cluster serves as cofactor.

The enzyme catalyses 5-amino-1-(5-phospho-beta-D-ribosyl)imidazole + S-adenosyl-L-methionine = 4-amino-2-methyl-5-(phosphooxymethyl)pyrimidine + CO + 5'-deoxyadenosine + formate + L-methionine + 3 H(+). Its pathway is cofactor biosynthesis; thiamine diphosphate biosynthesis. Catalyzes the synthesis of the hydroxymethylpyrimidine phosphate (HMP-P) moiety of thiamine from aminoimidazole ribotide (AIR) in a radical S-adenosyl-L-methionine (SAM)-dependent reaction. This chain is Phosphomethylpyrimidine synthase, found in Chlorobium phaeobacteroides (strain BS1).